Consider the following 355-residue polypeptide: UDP-N-acetylglucosamine--N-acetylmuramyl-(pentapeptide) pyrophosphoryl-undecaprenol N-acetylglucosamine transferase (355 aa).

UDP-N-acetyl-alpha-D-glucosamine contacts are provided by residues threonine 15–glycine 17, asparagine 127, arginine 163, serine 191, isoleucine 244, alanine 263–glutamate 268, and glutamine 288.

It belongs to the glycosyltransferase 28 family. MurG subfamily.

The protein localises to the cell inner membrane. The catalysed reaction is di-trans,octa-cis-undecaprenyl diphospho-N-acetyl-alpha-D-muramoyl-L-alanyl-D-glutamyl-meso-2,6-diaminopimeloyl-D-alanyl-D-alanine + UDP-N-acetyl-alpha-D-glucosamine = di-trans,octa-cis-undecaprenyl diphospho-[N-acetyl-alpha-D-glucosaminyl-(1-&gt;4)]-N-acetyl-alpha-D-muramoyl-L-alanyl-D-glutamyl-meso-2,6-diaminopimeloyl-D-alanyl-D-alanine + UDP + H(+). It participates in cell wall biogenesis; peptidoglycan biosynthesis. Its function is as follows. Cell wall formation. Catalyzes the transfer of a GlcNAc subunit on undecaprenyl-pyrophosphoryl-MurNAc-pentapeptide (lipid intermediate I) to form undecaprenyl-pyrophosphoryl-MurNAc-(pentapeptide)GlcNAc (lipid intermediate II). This chain is UDP-N-acetylglucosamine--N-acetylmuramyl-(pentapeptide) pyrophosphoryl-undecaprenol N-acetylglucosamine transferase, found in Cronobacter sakazakii (strain ATCC BAA-894) (Enterobacter sakazakii).